The sequence spans 366 residues: Chorismate synthase (366 aa).

NADP(+) contacts are provided by arginine 48 and arginine 54. Residues 125 to 127 (RSS), 237 to 238 (NA), glycine 277, 292 to 296 (KPTSS), and arginine 318 each bind FMN.

This sequence belongs to the chorismate synthase family. In terms of assembly, homotetramer. It depends on FMNH2 as a cofactor.

The catalysed reaction is 5-O-(1-carboxyvinyl)-3-phosphoshikimate = chorismate + phosphate. It functions in the pathway metabolic intermediate biosynthesis; chorismate biosynthesis; chorismate from D-erythrose 4-phosphate and phosphoenolpyruvate: step 7/7. In terms of biological role, catalyzes the anti-1,4-elimination of the C-3 phosphate and the C-6 proR hydrogen from 5-enolpyruvylshikimate-3-phosphate (EPSP) to yield chorismate, which is the branch point compound that serves as the starting substrate for the three terminal pathways of aromatic amino acid biosynthesis. This reaction introduces a second double bond into the aromatic ring system. This chain is Chorismate synthase, found in Acidovorax sp. (strain JS42).